The primary structure comprises 337 residues: Eukaryotic translation initiation factor 3 subunit H (337 aa).

In terms of domain architecture, MPN spans Val-25 to Phe-158. Residue Ser-178 is modified to Phosphoserine; by ATPK1. Residues Arg-267–Gly-278 are compositionally biased toward basic and acidic residues. Residues Arg-267–Pro-290 form a disordered region.

This sequence belongs to the eIF-3 subunit H family. In terms of assembly, component of the eukaryotic translation initiation factor 3 (eIF-3) complex. Interacts directly with TIF3A1, TIF3B1, TIF3C1, TIF3E1 and TIF3F1. Associates with the CSN (COP9 signalosome) complex. Binds to CSN1, CSN7 and CSN8. Interacts with ATPK1. In response to auxin (NAA), phosphorylated at Ser-178 by ATPK1 and binds to polysomes via TOR signaling. This phosphorylation is repressed by Torin-1. As to expression, mostly expressed in roots and flowers, and, to a lower extent, in leaves, stems and siliques.

It is found in the cytoplasm. Component of the eukaryotic translation initiation factor 3 (eIF-3) complex, which is involved in protein synthesis of a specialized repertoire of mRNAs and, together with other initiation factors, stimulates binding of mRNA and methionyl-tRNAi to the 40S ribosome. The eIF-3 complex specifically targets and initiates translation of a subset of mRNAs involved in cell proliferation (Potential). Regulates translation initiation of specific 5' mRNAs harboring multiple upstream open reading frames (uORFs) in their 5' leader sequence (e.g. BETA-OHASE 2 and LHY). This Arabidopsis thaliana (Mouse-ear cress) protein is Eukaryotic translation initiation factor 3 subunit H (TIF3H1).